A 393-amino-acid chain; its full sequence is Pre-mRNA-splicing regulator WTAP (393 aa).

The segment at 242 to 393 is disordered; the sequence is QIQISGNRTP…SSVNVQGSVL (152 aa). Residues 254–267 show a composition bias toward basic and acidic residues; sequence EPKDEGETSGKDCG. Composition is skewed to polar residues over residues 272 to 286 and 321 to 353; these read GPSNGGSSLQRTHSS and DGSSYINPLSTGYESVDSPTGSENSLTHQSNDT. Residues 354–365 are compositionally biased toward basic and acidic residues; that stretch reads DSNHDSQEEKPV. Residues 369–393 show a composition bias toward polar residues; sequence GNRTVSSRHLQNGLDSSVNVQGSVL.

It belongs to the fl(2)d family. In terms of assembly, component of the WMM complex, a N6-methyltransferase complex composed of a catalytic subcomplex, named MAC, and of an associated subcomplex, named MACOM. Component of the MACOM subcomplex.

The protein localises to the nucleus speckle. It is found in the nucleus. It localises to the nucleoplasm. Functionally, associated component of the WMM complex, a complex that mediates N6-methyladenosine (m6A) methylation of RNAs, a modification that plays a role in the efficiency of mRNA splicing and RNA processing. This chain is Pre-mRNA-splicing regulator WTAP, found in Xenopus laevis (African clawed frog).